We begin with the raw amino-acid sequence, 161 residues long: Allophycocyanin beta chain (161 aa).

Asparagine 71 is modified (N4-methylasparagine). Cysteine 81 serves as a coordination point for (2R,3E)-phycocyanobilin.

It belongs to the phycobiliprotein family. Heterodimer of an alpha and a beta chain. In terms of processing, contains one covalently linked phycocyanobilin chromophore.

Its subcellular location is the plastid. It localises to the chloroplast thylakoid membrane. In terms of biological role, light-harvesting photosynthetic bile pigment-protein from the phycobiliprotein complex. Allophycocyanin has a maximum absorption at approximately 650 nanometers. This Porphyra purpurea (Red seaweed) protein is Allophycocyanin beta chain (apcB).